The following is a 450-amino-acid chain: Magnesium transporter MgtE (450 aa).

At 1–283 (MEEKLAVSLQ…SEAGPVALWL (283 aa)) the chain is on the cytoplasmic side. Mg(2+)-binding residues include glutamate 59, aspartate 91, aspartate 95, and glycine 136. 2 consecutive CBS domains span residues 138–200 (MTPE…RVAE) and 202–258 (MNPK…EATE). Residues tyrosine 170, serine 185, arginine 187, aspartate 188, and valine 207 each contribute to the ATP site. The Mg(2+) site is built by glutamate 216, alanine 223, aspartate 226, aspartate 247, aspartate 250, glutamate 255, glutamate 258, and aspartate 259. Glutamate 275 contacts Ca(2+). Mn(2+) contacts are provided by glutamate 275, glutamine 304, glutamate 307, and glutamate 311. The helical transmembrane segment at 284 to 306 (ARVRWLVILILTGMVTSSILQGF) threads the bilayer. At 307–315 (ESVLEAVTA) the chain is on the periplasmic side. Glutamate 311 is a Ca(2+) binding site. Residues 316 to 337 (LAFYVPVLLGTGGNTGNQSATL) form a helical membrane-spanning segment. The Cytoplasmic segment spans residues 338–351 (IIRALATRDLDLRD). Residues 352 to 381 (WRRVFLKEMGVGLLLGLTLSFLLVGKVYWD) traverse the membrane as a helical segment. Residues 382 to 385 (GHPL) are Periplasmic-facing. Histidine 383 contacts Mn(2+). The helical transmembrane segment at 386-409 (LLPVVGVSLVLIVFFANLVGAMLP) threads the bilayer. The Cytoplasmic portion of the chain corresponds to 410 to 420 (FLLRRLGVDPA). Residues aspartate 418, alanine 428, and aspartate 432 each contribute to the Mg(2+) site. Residues 421 to 443 (LVSNPLVATLSDVTGLLIYLSVA) form a helical membrane-spanning segment. Over 444–450 (RLLLEAV) the chain is Periplasmic.

Belongs to the SLC41A transporter family. In terms of assembly, homodimer.

Its subcellular location is the cell inner membrane. It catalyses the reaction Mg(2+)(in) = Mg(2+)(out). Its activity is regulated as follows. The channel activity is regulated via the N-terminal cytoplasmic region, which acts as a Mg(2+) sensor to regulate the gating of the ion-conducting pore in response to the intracellular magnesium concentration. Under high-intracellular magnesium conditions, binding of magnesium to the N-terminal cytoplasmic domain stabilizes the closed conformation of the channel. Under low-intracellular magnesium conditions, the channel is in equilibrium between the open and closed states. A cation-binding site within the membrane (M1) strictly recognizes the size and geometry of the Mg(2+) hydration shells, which may be important for the selective transport of Mg(2+) over other cations. Cation-binding sites on the periplasmic side (M2 and M3) regulate channel opening and prevent conduction of near-cognate cations. Binding of Mn(2+) to the periplasmic sites strongly inhibits the Mg(2+) transport activity. In addition, activity is regulated by ATP, which binds to MgtE and modulates its Mg(2+)-dependent channel gating. ATP binding enhances the intracellular domain affinity for Mg(2+) within physiological concentrations of this divalent cation, enabling MgtE to function as an in vivo Mg(2+) sensor. ATP dissociation from MgtE upregulates Mg(2+) influx at both high and low intracellular Mg(2+) concentrations. Its function is as follows. Highly selective magnesium channel that plays an important role in Mg(2+) homeostasis. Functions as a Mg(2+)-dependent gating channel. Exhibits low activity with cobalt, suggesting that it might also be involved in the uptake of Co(2+) as a micronutrient. Also exhibits low activity with Ca(2+), but it shows almost no activity with Mn(2+). The polypeptide is Magnesium transporter MgtE (Thermus thermophilus (strain ATCC 27634 / DSM 579 / HB8)).